Reading from the N-terminus, the 327-residue chain is Probable cell division protein WhiA (327 aa).

The H-T-H motif DNA-binding region spans 275–308; sequence SLEELGQLADPPMTKDAVAGRIRRLLSMADRKAK. Residues 306–327 are disordered; that stretch reads KAKETGIPDTESAVTADLLDDA.

The protein belongs to the WhiA family.

Functionally, involved in cell division and chromosome segregation. The chain is Probable cell division protein WhiA from Rhodococcus jostii (strain RHA1).